Here is a 452-residue protein sequence, read N- to C-terminus: Gastrin/cholecystokinin type B receptor (452 aa).

Residues Met1–Leu21 form a disordered region. The Extracellular portion of the chain corresponds to Met1–Arg57. Asn7, Asn30, and Asn36 each carry an N-linked (GlcNAc...) asparagine glycan. A helical membrane pass occupies residues Ile58 to Leu79. At Gly80–Thr87 the chain is on the cytoplasmic side. A helical transmembrane segment spans residues Val88 to Pro109. Topologically, residues Phe110–Ser131 are extracellular. Cys127 and Cys205 are oxidised to a cystine. Residues Tyr132–Leu150 traverse the membrane as a helical segment. Residues Glu151 to His170 lie on the Cytoplasmic side of the membrane. A helical membrane pass occupies residues Ala171–Tyr189. Over Pro190–Ser219 the chain is Extracellular. The helical transmembrane segment at Val220–Ser242 threads the bilayer. Over Arg243–Arg338 the chain is Cytoplasmic. The segment at Ser257–Pro286 is disordered. A helical transmembrane segment spans residues Met339 to Trp360. The Extracellular segment spans residues Arg361–Ser378. The helical transmembrane segment at Phe379 to His399 threads the bilayer. At Arg400–Gly452 the chain is on the cytoplasmic side. Cys413 carries S-palmitoyl cysteine lipidation. The disordered stretch occupies residues Arg421–Gly452. Polar residues predominate over residues Ser434–Gly452.

It belongs to the G-protein coupled receptor 1 family. In terms of tissue distribution, parietal cells, pancreas, brain and various neoplastic tissues.

Its subcellular location is the cell membrane. Functionally, receptor for gastrin and cholecystokinin. The CCK-B receptors occur throughout the central nervous system where they modulate anxiety, analgesia, arousal, and neuroleptic activity. This receptor mediates its action by association with G proteins that activate a phosphatidylinositol-calcium second messenger system. The polypeptide is Gastrin/cholecystokinin type B receptor (Cckbr) (Rattus norvegicus (Rat)).